A 260-amino-acid polypeptide reads, in one-letter code: MTGLCDSHLHTPLCGHATGTPREYAQAALDAGLSGLCFTDHMPMPRWYDAPWRMKLEQLPEYIAEIQAVQQEFAGRLDVRLGLEADFHPGTEKFVEKVLGMFDWDYVIGSVHYLGAWGFDNPEFVAEYEERDLGGLYRDYYALVEGAARSGLFDAIGHLDLPKKFGHLDPDPVYALHALDVVAGQGLALDFNTAGWRKPVAEAYPAPDLVRAAAERGIPFVLGSDAHQPGEVGFRFADAVKEIRDVGGRTVTFRHRKMQP.

The protein belongs to the PHP hydrolase family. HisK subfamily.

It carries out the reaction L-histidinol phosphate + H2O = L-histidinol + phosphate. The protein operates within amino-acid biosynthesis; L-histidine biosynthesis; L-histidine from 5-phospho-alpha-D-ribose 1-diphosphate: step 8/9. In Deinococcus radiodurans (strain ATCC 13939 / DSM 20539 / JCM 16871 / CCUG 27074 / LMG 4051 / NBRC 15346 / NCIMB 9279 / VKM B-1422 / R1), this protein is Probable histidinol-phosphatase (hisK).